The primary structure comprises 143 residues: Glutaredoxin-2 (143 aa).

A mitochondrion-targeting transit peptide spans 1-30 (METNFSFDSNLIVIIIITLFATRIIAKRFL). S37 is modified (phosphoserine). Residues 41 to 143 (VAHVKDLIGQ…LAEILKPVFQ (103 aa)) form the Glutaredoxin domain. Residue 58 to 63 (KTYCPY) participates in glutathione binding. An S-glutathionyl cysteine; alternate modification is found at C61. C61 and C64 are joined by a disulfide. S91 carries the post-translational modification Phosphoserine. Glutathione contacts are provided by residues V109 and 122-123 (NS).

Belongs to the glutaredoxin family.

The protein resides in the cytoplasm. It is found in the mitochondrion. The enzyme catalyses 2 glutathione + H2O2 = glutathione disulfide + 2 H2O. It carries out the reaction 1-chloro-2,4-dinitrobenzene + glutathione = 2,4-dinitrophenyl-S-glutathione + chloride + H(+). The catalysed reaction is RX + glutathione = an S-substituted glutathione + a halide anion + H(+). Its function is as follows. Component of the glutathione system which performs several activities such as glutathione-dependent oxidoreductase, glutathione peroxidase and glutathione S-transferase (GST) activity. The disulfide bond functions as an electron carrier in the glutathione-dependent synthesis of deoxyribonucleotides by the enzyme ribonucleotide reductase. In addition, it is also involved in reducing cytosolic protein- and non-protein-disulfides in a coupled system with glutathione reductase. Required for resistance to reactive oxygen species (ROS) by directly reducing hydroperoxides and for the detoxification of ROS-mediated damage. GRX2 is more active as an oxidoreductase than GRX1. Responsible for the S-glutathionylation of DHBP synthase. This is Glutaredoxin-2 (GRX2) from Saccharomyces cerevisiae (strain ATCC 204508 / S288c) (Baker's yeast).